Here is a 371-residue protein sequence, read N- to C-terminus: MSIFQLLARDGAARRGTIRLPRGTVQTPAFMPVGTYGTVKAMSPEELKTLGAEIILGNTFHLFLRPGLEVISAVGGLHRMMHWDRPILTDSGGFQVFSLGALRKLTEAGVQFRAPTDGHMVFLGPEESMQIQAALGSDIAMVFDECTPHPASYEEARVSMELSLRWAARSHAAYAGPGELFGIVQGGMYADLRRRSLAGLQRLDFPGLAIGGLSVGESKVEMMQVLDDLMPHMPADRPRYLMGVGTPEDLVEGVRRGVDMFDCVMPTRNARNGWLFTRDGVLKLRNARYEKDVLPPDPACACYTCQNYSRAYLRHLQRSHEILGARLNTLHNLHYYQELMAGLREAIAAGRLDAYADDFYRRRRAGSLVGA.

The active-site Proton acceptor is the Asp-90. Residues 90 to 94 (DSGGF), Asp-144, Gln-185, and Gly-212 contribute to the substrate site. The interval 243–249 (GVGTPED) is RNA binding. Asp-262 serves as the catalytic Nucleophile. The interval 267–271 (TRNAR) is RNA binding; important for wobble base 34 recognition. The Zn(2+) site is built by Cys-300, Cys-302, Cys-305, and His-331.

The protein belongs to the queuine tRNA-ribosyltransferase family. Homodimer. Within each dimer, one monomer is responsible for RNA recognition and catalysis, while the other monomer binds to the replacement base PreQ1. Zn(2+) is required as a cofactor.

It catalyses the reaction 7-aminomethyl-7-carbaguanine + guanosine(34) in tRNA = 7-aminomethyl-7-carbaguanosine(34) in tRNA + guanine. It functions in the pathway tRNA modification; tRNA-queuosine biosynthesis. Its function is as follows. Catalyzes the base-exchange of a guanine (G) residue with the queuine precursor 7-aminomethyl-7-deazaguanine (PreQ1) at position 34 (anticodon wobble position) in tRNAs with GU(N) anticodons (tRNA-Asp, -Asn, -His and -Tyr). Catalysis occurs through a double-displacement mechanism. The nucleophile active site attacks the C1' of nucleotide 34 to detach the guanine base from the RNA, forming a covalent enzyme-RNA intermediate. The proton acceptor active site deprotonates the incoming PreQ1, allowing a nucleophilic attack on the C1' of the ribose to form the product. After dissociation, two additional enzymatic reactions on the tRNA convert PreQ1 to queuine (Q), resulting in the hypermodified nucleoside queuosine (7-(((4,5-cis-dihydroxy-2-cyclopenten-1-yl)amino)methyl)-7-deazaguanosine). The sequence is that of Queuine tRNA-ribosyltransferase from Acidithiobacillus ferrooxidans (strain ATCC 23270 / DSM 14882 / CIP 104768 / NCIMB 8455) (Ferrobacillus ferrooxidans (strain ATCC 23270)).